The following is a 379-amino-acid chain: Chaperone protein DnaJ (379 aa).

Residues 4–69 form the J domain; it reads DLYETLGVQK…QKRAAYDRYG (66 aa). The CR-type zinc-finger motif lies at 137 to 215; it reads GKTAQIRVPT…CHGQGRVVEE (79 aa). Cys-150, Cys-153, Cys-167, Cys-170, Cys-189, Cys-192, Cys-203, and Cys-206 together coordinate Zn(2+). CXXCXGXG motif repeat units follow at residues 150–157, 167–174, 189–196, and 203–210; these read CDVCTGTG, CGTCQGTG, CPTCGGRG, and CTKCHGQG.

Belongs to the DnaJ family. As to quaternary structure, homodimer. Zn(2+) is required as a cofactor.

Its subcellular location is the cytoplasm. In terms of biological role, participates actively in the response to hyperosmotic and heat shock by preventing the aggregation of stress-denatured proteins and by disaggregating proteins, also in an autonomous, DnaK-independent fashion. Unfolded proteins bind initially to DnaJ; upon interaction with the DnaJ-bound protein, DnaK hydrolyzes its bound ATP, resulting in the formation of a stable complex. GrpE releases ADP from DnaK; ATP binding to DnaK triggers the release of the substrate protein, thus completing the reaction cycle. Several rounds of ATP-dependent interactions between DnaJ, DnaK and GrpE are required for fully efficient folding. Also involved, together with DnaK and GrpE, in the DNA replication of plasmids through activation of initiation proteins. In Rhizobium meliloti (strain 1021) (Ensifer meliloti), this protein is Chaperone protein DnaJ.